The sequence spans 270 residues: Interleukin-1 beta (270 aa).

Positions 1 to 118 (MATVPEPTSE…VYDDDAFVCD (118 aa)) are excised as a propeptide.

The protein belongs to the IL-1 family. In terms of assembly, monomer. In its precursor form, weakly interacts with full-length MEFV; the mature cytokine does not interact at all. Interacts with integrins ITGAV:ITGBV and ITGA5:ITGB1; integrin-binding is required for IL1B signaling. Interacts with cargo receptor TMED10; the interaction is direct and is required for the secretion of IL1B mature form. Interacts with HSP90AB1; the interaction facilitates cargo translocation into the ERGIC. Interacts with HSP90B1; the interaction facilitates cargo translocation into the ERGIC.

It is found in the cytoplasm. It localises to the cytosol. The protein resides in the secreted. The protein localises to the lysosome. Its subcellular location is the extracellular exosome. Its function is as follows. Potent pro-inflammatory cytokine. Initially discovered as the major endogenous pyrogen, induces prostaglandin synthesis, neutrophil influx and activation, T-cell activation and cytokine production, B-cell activation and antibody production, and fibroblast proliferation and collagen production. Promotes Th17 differentiation of T-cells. Synergizes with IL12/interleukin-12 to induce IFNG synthesis from T-helper 1 (Th1) cells. Plays a role in angiogenesis by inducing VEGF production synergistically with TNF and IL6. Involved in transduction of inflammation downstream of pyroptosis: its mature form is specifically released in the extracellular milieu by passing through the gasdermin-D (GSDMD) pore. In Phoca vitulina richardii (Pacific harbor seal), this protein is Interleukin-1 beta (IL1B).